The chain runs to 174 residues: Peptidyl-prolyl cis-trans isomerase-like 1 (174 aa).

One can recognise a PPIase cyclophilin-type domain in the interval 5–159 (SPTYVTFDTS…EEIKIHRARL (155 aa)).

This sequence belongs to the cyclophilin-type PPIase family. PPIL1 subfamily.

It carries out the reaction [protein]-peptidylproline (omega=180) = [protein]-peptidylproline (omega=0). PPIases accelerate the folding of proteins. It catalyzes the cis-trans isomerization of proline imidic peptide bonds in oligopeptides. The polypeptide is Peptidyl-prolyl cis-trans isomerase-like 1 (CYP1) (Cryptococcus neoformans var. neoformans serotype D (strain B-3501A) (Filobasidiella neoformans)).